We begin with the raw amino-acid sequence, 331 residues long: Lipoyl synthase (331 aa).

The disordered stretch occupies residues 1–33 (MSDALIASSSEAPQSPAEQYDPTRKQKSADKTA). Over residues 7–19 (ASSSEAPQSPAEQ) the composition is skewed to low complexity. Basic and acidic residues predominate over residues 21 to 33 (DPTRKQKSADKTA). [4Fe-4S] cluster is bound by residues cysteine 78, cysteine 83, cysteine 89, cysteine 104, cysteine 108, cysteine 111, and serine 318. The 219-residue stretch at 89–307 (CFGKGTATFM…EEEAYKMGFT (219 aa)) folds into the Radical SAM core domain.

Belongs to the radical SAM superfamily. Lipoyl synthase family. [4Fe-4S] cluster serves as cofactor.

It is found in the cytoplasm. It catalyses the reaction [[Fe-S] cluster scaffold protein carrying a second [4Fe-4S](2+) cluster] + N(6)-octanoyl-L-lysyl-[protein] + 2 oxidized [2Fe-2S]-[ferredoxin] + 2 S-adenosyl-L-methionine + 4 H(+) = [[Fe-S] cluster scaffold protein] + N(6)-[(R)-dihydrolipoyl]-L-lysyl-[protein] + 4 Fe(3+) + 2 hydrogen sulfide + 2 5'-deoxyadenosine + 2 L-methionine + 2 reduced [2Fe-2S]-[ferredoxin]. It participates in protein modification; protein lipoylation via endogenous pathway; protein N(6)-(lipoyl)lysine from octanoyl-[acyl-carrier-protein]: step 2/2. Catalyzes the radical-mediated insertion of two sulfur atoms into the C-6 and C-8 positions of the octanoyl moiety bound to the lipoyl domains of lipoate-dependent enzymes, thereby converting the octanoylated domains into lipoylated derivatives. The polypeptide is Lipoyl synthase (Cupriavidus pinatubonensis (strain JMP 134 / LMG 1197) (Cupriavidus necator (strain JMP 134))).